The sequence spans 272 residues: Probable proteasome subunit alpha type-6 (272 aa).

The span at 243-261 (AARASRAAAEEPQAPTAEA) shows a compositional bias: low complexity. The interval 243-272 (AARASRAAAEEPQAPTAEAILDSADAMETD) is disordered.

This sequence belongs to the peptidase T1A family. In terms of assembly, the 26S proteasome consists of a 20S proteasome core and two 19S regulatory subunits. The 20S proteasome core is composed of 28 subunits that are arranged in four stacked rings, resulting in a barrel-shaped structure. The two end rings are each formed by seven alpha subunits, and the two central rings are each formed by seven beta subunits. The catalytic chamber with the active sites is on the inside of the barrel.

The protein resides in the cytoplasm. The protein localises to the nucleus. Its function is as follows. The proteasome is a multicatalytic proteinase complex which is characterized by its ability to cleave peptides with Arg, Phe, Tyr, Leu, and Glu adjacent to the leaving group at neutral or slightly basic pH. The proteasome has an ATP-dependent proteolytic activity. The sequence is that of Probable proteasome subunit alpha type-6 from Schizosaccharomyces pombe (strain 972 / ATCC 24843) (Fission yeast).